A 137-amino-acid polypeptide reads, in one-letter code: Bombinin-like peptides 1 (137 aa).

An N-terminal signal peptide occupies residues 1–18 (MNFKYIVAVSILIASAYA). An Asparagine amide modification is found at asparagine 70. Residues 91–112 (LDSFEHPEEASEKETRGFNQEE) are disordered. Isoleucine 118 carries the post-translational modification D-allo-isoleucine. Isoleucine 136 is subject to Isoleucine amide.

Belongs to the bombinin family. In terms of tissue distribution, expressed by the skin glands.

It is found in the secreted. Functionally, has antimicrobial activity, but no hemolytic activity. Preliminary evidence indicates that this peptide does not lyse and thus kill the bacteria by its antimicrobial activity. Its function is as follows. Bombinin H has antibacterial and hemolytic activity. This is Bombinin-like peptides 1 from Bombina variegata (Yellow-bellied toad).